A 104-amino-acid polypeptide reads, in one-letter code: Transcription factor S (104 aa).

Zn(2+)-binding residues include C4, C7, C20, C22, C65, C68, C93, and C96. A C4-type zinc finger spans residues 4-22 (CPKCGAVMFPSEGKFKCQC). Residues 61 to 101 (TRVECPKCGNMEAFWWLQQTRRADESETRFFRCTRCKHTWR) form a TFIIS-type zinc finger.

The protein belongs to the archaeal RpoM/eukaryotic RPA12/RPB9/RPC11 RNA polymerase family.

Induces RNA cleavage activity in the RNA polymerase. In its presence, the cleavage activity of the RNA polymerase truncates the RNA back to position +15 in a stepwise manner by releasing mainly dinucleotides from the 3'-end of the nascent RNA. The truncated RNAs are able to continue elongation. Involved in transcriptional proofreading and fidelity. Misincorporation of nucleotides during elongation of transcription leads to arrested elongation complexes which are rescued by TFS-promoted removal of a dinucleotide from the 3'-end. TFS is able to induce a cleavage resynthesis cycle in stalled elongation complexes (resulting from the next missing nucleotide or a reduced incorporation rate of a wrong nucleotide) preventing misincorporation and enabling proofreading in a post-incorporation manner. Pausing of elongation complexes is the main determinant of TFS-induced RNA cleavage. The sequence is that of Transcription factor S from Methanothermobacter thermautotrophicus (strain ATCC 29096 / DSM 1053 / JCM 10044 / NBRC 100330 / Delta H) (Methanobacterium thermoautotrophicum).